The primary structure comprises 257 residues: Trans-aconitate 2-methyltransferase (257 aa).

Belongs to the methyltransferase superfamily. Tam family.

It localises to the cytoplasm. The enzyme catalyses trans-aconitate + S-adenosyl-L-methionine = (E)-3-(methoxycarbonyl)pent-2-enedioate + S-adenosyl-L-homocysteine. In terms of biological role, catalyzes the S-adenosylmethionine monomethyl esterification of trans-aconitate. The sequence is that of Trans-aconitate 2-methyltransferase from Sinorhizobium medicae (strain WSM419) (Ensifer medicae).